We begin with the raw amino-acid sequence, 168 residues long: Putative gustatory receptor clone PTE03 (168 aa).

The Extracellular portion of the chain corresponds to 1–25 (TTVPKMLINLQKQNKAISYAGCITQ). Residues Cys-22 and Cys-104 are joined by a disulfide bond. Residues 26–45 (LSFVLLFAGMENFLLAAMAY) form a helical membrane-spanning segment. The Cytoplasmic portion of the chain corresponds to 46–67 (DRYVAICKPLRYTAIMKAHLCL). A helical membrane pass occupies residues 68–88 (VMTLLSLCISIVDALLHGLMI). Topologically, residues 89–121 (LRLSFCTFLEIPHYFCELYQVIKLSCSDTLINN) are extracellular. The chain crosses the membrane as a helical span at residues 122-143 (ILVYTMTSTLGGVPLGGIIFSY). Topologically, residues 144-165 (FKIISSILRMPSSGSRHRAFST) are cytoplasmic. A helical membrane pass occupies residues 166–168 (CGS).

The protein belongs to the G-protein coupled receptor 1 family. In terms of tissue distribution, tongue specific.

The protein resides in the cell membrane. Its function is as follows. Possible taste receptor. The sequence is that of Putative gustatory receptor clone PTE03 (Olr1145) from Rattus norvegicus (Rat).